We begin with the raw amino-acid sequence, 249 residues long: 5'-nucleotidase SurE (249 aa).

A divalent metal cation contacts are provided by Asp-8, Asp-9, Ser-39, and Asn-91.

The protein belongs to the SurE nucleotidase family. Requires a divalent metal cation as cofactor.

It is found in the cytoplasm. The catalysed reaction is a ribonucleoside 5'-phosphate + H2O = a ribonucleoside + phosphate. Functionally, nucleotidase that shows phosphatase activity on nucleoside 5'-monophosphates. This is 5'-nucleotidase SurE from Haemophilus influenzae (strain PittGG).